Reading from the N-terminus, the 94-residue chain is Co-chaperonin GroES (94 aa).

It belongs to the GroES chaperonin family. In terms of assembly, heptamer of 7 subunits arranged in a ring. Interacts with the chaperonin GroEL.

It is found in the cytoplasm. Functionally, together with the chaperonin GroEL, plays an essential role in assisting protein folding. The GroEL-GroES system forms a nano-cage that allows encapsulation of the non-native substrate proteins and provides a physical environment optimized to promote and accelerate protein folding. GroES binds to the apical surface of the GroEL ring, thereby capping the opening of the GroEL channel. The chain is Co-chaperonin GroES from Streptococcus pneumoniae (strain Taiwan19F-14).